A 214-amino-acid chain; its full sequence is NADH-quinone oxidoreductase subunit C (214 aa).

It belongs to the complex I 30 kDa subunit family. NDH-1 is composed of 14 different subunits. Subunits NuoB, C, D, E, F, and G constitute the peripheral sector of the complex.

The protein localises to the cell inner membrane. It catalyses the reaction a quinone + NADH + 5 H(+)(in) = a quinol + NAD(+) + 4 H(+)(out). Functionally, NDH-1 shuttles electrons from NADH, via FMN and iron-sulfur (Fe-S) centers, to quinones in the respiratory chain. The immediate electron acceptor for the enzyme in this species is believed to be ubiquinone. Couples the redox reaction to proton translocation (for every two electrons transferred, four hydrogen ions are translocated across the cytoplasmic membrane), and thus conserves the redox energy in a proton gradient. This chain is NADH-quinone oxidoreductase subunit C, found in Caulobacter sp. (strain K31).